The primary structure comprises 111 residues: MILIWLSIFMLVFIMLTLGMFVNKKVSLDREKSSPFECGFDPLNSSRTPFSIRFFVITLIFLIFDVEIYLLLPMVYLNMSSPTTYLIIFFTFILVAGVFYEWSEGALSWIK.

The next 3 membrane-spanning stretches (helical) occupy residues 2 to 22 (ILIW…GMFV), 54 to 74 (FFVI…LLPM), and 82 to 102 (PTTY…FYEW).

The protein belongs to the complex I subunit 3 family.

It localises to the mitochondrion membrane. The enzyme catalyses a ubiquinone + NADH + 5 H(+)(in) = a ubiquinol + NAD(+) + 4 H(+)(out). Its function is as follows. Core subunit of the mitochondrial membrane respiratory chain NADH dehydrogenase (Complex I) that is believed to belong to the minimal assembly required for catalysis. Complex I functions in the transfer of electrons from NADH to the respiratory chain. The immediate electron acceptor for the enzyme is believed to be ubiquinone. In Artemia franciscana (Brine shrimp), this protein is NADH-ubiquinone oxidoreductase chain 3 (ND3).